We begin with the raw amino-acid sequence, 472 residues long: Glutamate--tRNA ligase (472 aa).

The short motif at P18–G28 is the 'HIGH' region element. Over residues R122 to P138 the composition is skewed to basic and acidic residues. The segment at R122–Q150 is disordered. A 'KMSKS' region motif is present at residues K250–R254. K253 provides a ligand contact to ATP.

The protein belongs to the class-I aminoacyl-tRNA synthetase family. Glutamate--tRNA ligase type 1 subfamily. Monomer.

The protein resides in the cytoplasm. The catalysed reaction is tRNA(Glu) + L-glutamate + ATP = L-glutamyl-tRNA(Glu) + AMP + diphosphate. Functionally, catalyzes the attachment of glutamate to tRNA(Glu) in a two-step reaction: glutamate is first activated by ATP to form Glu-AMP and then transferred to the acceptor end of tRNA(Glu). This Thiobacillus denitrificans (strain ATCC 25259 / T1) protein is Glutamate--tRNA ligase.